A 412-amino-acid chain; its full sequence is FAD-dependent monooxygenase nscC (412 aa).

The N-terminal stretch at 1–21 (MGKPQETILIIGAGIAGLTAS) is a signal peptide. FAD contacts are provided by E35 and A46. N-linked (GlcNAc...) asparagine glycans are attached at residues N68 and N92. R119 serves as a coordination point for FAD. 3 N-linked (GlcNAc...) asparagine glycosylation sites follow: N170, N231, and N251. FAD contacts are provided by D326 and G339.

It belongs to the paxM FAD-dependent monooxygenase family. It depends on FAD as a cofactor.

It participates in secondary metabolite biosynthesis. Its function is as follows. FAD-dependent monooxygenase; part of the gene cluster that mediates the biosynthesis of neosartoricin B, a prenylated anthracenone that probably exhibits T-cell antiproliferative activity, suggestive of a physiological role as an immunosuppressive agent. The non-reducing polyketide synthase nscA probably synthesizes and cyclizes the decaketide backbone. The hydrolase nscB then mediates the product release through hydrolysis followed by spontaneous decarboxylation. The prenyltransferase nscD catalyzes the addition of the dimethylallyl group to the aromatic C5. The FAD-dependent monooxygenase nscC is then responsible for the stereospecific hydroxylation at C2. Neosartoricin B can be converted into two additional compounds neosartoricins C and D. Neosartoricin C is a spirocyclic compound that is cyclized through the attack of C3 hydroxyl on C14, followed by dehydration. On the other hand, neosartoricin D is a further cyclized compound in which attack of C2 on C14 in neosartoricin C results in the formation of the acetal-containing dioxabicyclo-octanone ring. Both of these compounds are novel and possibly represent related metabolites of the gene cluster. In Trichophyton rubrum (strain ATCC MYA-4607 / CBS 118892) (Athlete's foot fungus), this protein is FAD-dependent monooxygenase nscC.